The following is a 58-amino-acid chain: Large ribosomal subunit protein bL32 (58 aa).

Residues 1–20 (MALPKHKKSKSKRDKRRTHQ) show a composition bias toward basic residues. The segment at 1-26 (MALPKHKKSKSKRDKRRTHQKLTAPN) is disordered.

The protein belongs to the bacterial ribosomal protein bL32 family.

This is Large ribosomal subunit protein bL32 from Desulfatibacillum aliphaticivorans.